Consider the following 461-residue polypeptide: Pancreatic triacylglycerol lipase (461 aa).

The first 12 residues, W1–G12, serve as a signal peptide directing secretion. Cystine bridges form between C16–C22 and C103–C114. S165 acts as the Nucleophile in catalysis. The Charge relay system role is filled by D189. Ca(2+) is bound by residues E200, R203, D205, and D208. C250 and C274 are disulfide-bonded. H276 serves as the catalytic Charge relay system. Cystine bridges form between C298–C309, C312–C317, and C445–C461. Residues W351–C461 enclose the PLAT domain.

Belongs to the AB hydrolase superfamily. Lipase family. As to quaternary structure, forms a 1:1 stoichiometric complex with (pro)colipase/CLPS.

It is found in the secreted. It catalyses the reaction a triacylglycerol + H2O = a diacylglycerol + a fatty acid + H(+). The enzyme catalyses 1,2,3-tributanoylglycerol + H2O = dibutanoylglycerol + butanoate + H(+). The catalysed reaction is 1,2,3-tri-(9Z-octadecenoyl)-glycerol + H2O = di-(9Z)-octadecenoylglycerol + (9Z)-octadecenoate + H(+). It carries out the reaction all-trans-retinyl hexadecanoate + H2O = all-trans-retinol + hexadecanoate + H(+). It catalyses the reaction 1,2-di-(9Z-octadecenoyl)-glycerol + H2O = (9Z-octadecenoyl)-glycerol + (9Z)-octadecenoate + H(+). Its activity is regulated as follows. Inhibited by bile salts, is reactivated by (pro)colipase/CLPS. In terms of biological role, plays an important role in fat metabolism. It preferentially splits the esters of long-chain fatty acids at positions 1 and 3, producing mainly 2-monoacylglycerol and free fatty acids, and shows considerably higher activity against insoluble emulsified substrates than against soluble ones. This Equus caballus (Horse) protein is Pancreatic triacylglycerol lipase (PNLIP).